Consider the following 220-residue polypeptide: Aspartic protease inhibitor 8 (220 aa).

Positions 1-23 are cleaved as a signal peptide; that stretch reads MMKCLFLLCLCLLPIVVFSSTFT. Residues 24 to 32 constitute a propeptide that is removed on maturation; that stretch reads SQNLIDLPS. Intrachain disulfides connect cysteine 80–cysteine 125 and cysteine 174–cysteine 185.

This sequence belongs to the protease inhibitor I3 (leguminous Kunitz-type inhibitor) family.

Its subcellular location is the vacuole. Inhibitor of cathepsin D (aspartic protease) and trypsin (serine protease). May protect the plant by inhibiting proteases of invading organisms. The sequence is that of Aspartic protease inhibitor 8 from Solanum tuberosum (Potato).